The primary structure comprises 1289 residues: Ethylene-insensitive protein 2.1 (1289 aa).

5 helical membrane passes run 18–38 (LLPAVGPGLLIAIGYVDPGKW), 48–68 (FGFDLVLPMLLFNFVAILCQY), 96–116 (FLGVQAALSVIALDLTMILGI), 128–148 (LSTCVSLAAAEAILFPFFATL), and 155–175 (SFLCTCIAGFILLLYFFGVLI). Asn185 carries N-linked (GlcNAc...) asparagine glycosylation. A helical transmembrane segment spans residues 199–219 (LMSLLGASIMPHNFFLHSAIV). The N-linked (GlcNAc...) asparagine glycan is linked to Asn227. Helical transmembrane passes span 235-255 (LNHFFAILCIFSGIYLVNFVL), 260-280 (ANVFHSTGLVLLTFPDAMSLM), 288-308 (VAPFGFSLILFFANQITAFSW), 335-355 (IIAVVPALYCVWTSGVEGIYQ), 356-376 (LLILTQVMVALLLPSSVIPLF), 393-413 (FLEFVALISFMGMLGIKIIFV), and 439-459 (YIVLLITACSSFCLMLWLAAT). Residue Asn521 is glycosylated (N-linked (GlcNAc...) asparagine). Residues 611 to 659 (LHTEKEDDEGDNWEPEDSSKGVPGSTLSLTSDGPGSFRSLSGKSDAGGN) are disordered. The segment covering 616 to 626 (EDDEGDNWEPE) has biased composition (acidic residues). Polar residues predominate over residues 635–652 (STLSLTSDGPGSFRSLSG). Residues Ser646 and Ser663 each carry the phosphoserine modification. An N-linked (GlcNAc...) asparagine glycan is attached at Asn745. The tract at residues 792 to 816 (SIADSSERRYSGVRTPPSSDGWDNQ) is disordered. Over residues 807 to 816 (PPSSDGWDNQ) the composition is skewed to polar residues. Thr819 is modified (phosphothreonine). Ser923 is modified (phosphoserine). Residue Asn1025 is glycosylated (N-linked (GlcNAc...) asparagine). The interval 1208–1227 (HRSSPPASNGMLPPASKPGR) is disordered. The short motif at 1274-1281 (LKRYKRRL) is the Nuclear localization signal element.

It belongs to the NRAMP (TC 2.A.55) family.

It localises to the endoplasmic reticulum membrane. The protein localises to the nucleus. Its subcellular location is the cytoplasm. In terms of biological role, central factor in signaling pathways regulated by ethylene (ET) and involved in various processes including development, plant defense, senescence, nucleotide sugar flux, and tropisms. Its function is as follows. Trafficking signal inducing ethylene response. The nuclear localization is both necessary and sufficient to activate EIN3-mediated transcription and ethylene responses. This Populus trichocarpa (Western balsam poplar) protein is Ethylene-insensitive protein 2.1.